We begin with the raw amino-acid sequence, 159 residues long: Ribosomal RNA large subunit methyltransferase H (159 aa).

S-adenosyl-L-methionine contacts are provided by residues leucine 76, glycine 108, and 127 to 132 (FGRLTL).

The protein belongs to the RNA methyltransferase RlmH family. Homodimer.

The protein localises to the cytoplasm. It catalyses the reaction pseudouridine(1915) in 23S rRNA + S-adenosyl-L-methionine = N(3)-methylpseudouridine(1915) in 23S rRNA + S-adenosyl-L-homocysteine + H(+). Its function is as follows. Specifically methylates the pseudouridine at position 1915 (m3Psi1915) in 23S rRNA. This is Ribosomal RNA large subunit methyltransferase H from Listeria monocytogenes serotype 4a (strain HCC23).